The sequence spans 478 residues: Kynurenine 3-monooxygenase (478 aa).

Residues valine 19, 37 to 40 (YEAR), and alanine 57 contribute to the FAD site. Residues arginine 85 and tyrosine 99 each coordinate L-kynurenine. FAD is bound by residues arginine 111, leucine 136, threonine 172, aspartate 304, and 317 to 318 (MN). Asparagine 363 and tyrosine 398 together coordinate L-kynurenine. 2 consecutive transmembrane segments (helical) span residues 385-404 (FLHALMPSTFIPLYTMVAFT) and 425-445 (GLFVLGSLVAIGSAYILVHHL).

Belongs to the aromatic-ring hydroxylase family. KMO subfamily. FAD is required as a cofactor. Highest activity in liver and kidney. Low activity in spleen, stomach, intestinal tract, esophagus, heart and lung.

Its subcellular location is the mitochondrion outer membrane. The catalysed reaction is L-kynurenine + NADPH + O2 + H(+) = 3-hydroxy-L-kynurenine + NADP(+) + H2O. Its pathway is cofactor biosynthesis; NAD(+) biosynthesis; quinolinate from L-kynurenine: step 1/3. Functionally, catalyzes the hydroxylation of L-kynurenine (L-Kyn) to form 3-hydroxy-L-kynurenine (L-3OHKyn). Required for synthesis of quinolinic acid, a neurotoxic NMDA receptor antagonist and potential endogenous inhibitor of NMDA receptor signaling in axonal targeting, synaptogenesis and apoptosis during brain development. Quinolinic acid may also affect NMDA receptor signaling in pancreatic beta cells, osteoblasts, myocardial cells, and the gastrointestinal tract. The chain is Kynurenine 3-monooxygenase from Rattus norvegicus (Rat).